Consider the following 861-residue polypeptide: Glucans biosynthesis glucosyltransferase H (861 aa).

Transmembrane regions (helical) follow at residues 142 to 162 (FILL…MKGI), 188 to 208 (VLPY…FCWV), 516 to 536 (VFLT…FLVL), 573 to 593 (LFST…MLIW), 600 to 620 (FGGV…SVLL), and 683 to 703 (FLWW…VSVI).

Belongs to the glycosyltransferase 2 family. OpgH subfamily.

It is found in the cell inner membrane. It participates in glycan metabolism; osmoregulated periplasmic glucan (OPG) biosynthesis. Its function is as follows. Involved in the biosynthesis of osmoregulated periplasmic glucans (OPGs). This is Glucans biosynthesis glucosyltransferase H from Pseudomonas aeruginosa (strain LESB58).